The chain runs to 498 residues: Probable cytosol aminopeptidase (498 aa).

Residues Lys264 and Asp269 each contribute to the Mn(2+) site. Residue Lys276 is part of the active site. Residues Asp287, Asp346, and Glu348 each contribute to the Mn(2+) site. The active site involves Arg350.

It belongs to the peptidase M17 family. The cofactor is Mn(2+).

Its subcellular location is the cytoplasm. The enzyme catalyses Release of an N-terminal amino acid, Xaa-|-Yaa-, in which Xaa is preferably Leu, but may be other amino acids including Pro although not Arg or Lys, and Yaa may be Pro. Amino acid amides and methyl esters are also readily hydrolyzed, but rates on arylamides are exceedingly low.. It carries out the reaction Release of an N-terminal amino acid, preferentially leucine, but not glutamic or aspartic acids.. In terms of biological role, presumably involved in the processing and regular turnover of intracellular proteins. Catalyzes the removal of unsubstituted N-terminal amino acids from various peptides. This chain is Probable cytosol aminopeptidase, found in Brucella anthropi (strain ATCC 49188 / DSM 6882 / CCUG 24695 / JCM 21032 / LMG 3331 / NBRC 15819 / NCTC 12168 / Alc 37) (Ochrobactrum anthropi).